The following is a 104-amino-acid chain: Large ribosomal subunit protein bL21 (104 aa).

The span at 81 to 90 (QGYRRHHGHR) shows a compositional bias: basic residues. A disordered region spans residues 81–104 (QGYRRHHGHRQPYTQVKITGISAG).

It belongs to the bacterial ribosomal protein bL21 family. In terms of assembly, part of the 50S ribosomal subunit. Contacts protein L20.

Functionally, this protein binds to 23S rRNA in the presence of protein L20. The sequence is that of Large ribosomal subunit protein bL21 from Halorhodospira halophila (strain DSM 244 / SL1) (Ectothiorhodospira halophila (strain DSM 244 / SL1)).